We begin with the raw amino-acid sequence, 149 residues long: UPF0756 membrane protein BBR47_32760 (149 aa).

Transmembrane regions (helical) follow at residues 3 to 23 (WISI…NATV), 48 to 68 (HGLQ…LASG), 85 to 105 (LLAV…TVLM), 106 to 126 (SQNP…VTFF), and 128 to 148 (GVAV…QFLP).

This sequence belongs to the UPF0756 family.

The protein resides in the cell membrane. This chain is UPF0756 membrane protein BBR47_32760, found in Brevibacillus brevis (strain 47 / JCM 6285 / NBRC 100599).